The primary structure comprises 200 residues: 2-phospho-L-lactate guanylyltransferase (200 aa).

It belongs to the CofC family. As to quaternary structure, homodimer.

The catalysed reaction is (2S)-2-phospholactate + GTP + H(+) = (2S)-lactyl-2-diphospho-5'-guanosine + diphosphate. It participates in cofactor biosynthesis; coenzyme F420 biosynthesis. Its function is as follows. Guanylyltransferase that catalyzes the activation of (2S)-2-phospholactate (2-PL) as (2S)-lactyl-2-diphospho-5'-guanosine, via the condensation of 2-PL with GTP. It is involved in the biosynthesis of coenzyme F420, a hydride carrier cofactor. This is 2-phospho-L-lactate guanylyltransferase from Ferroglobus placidus (strain DSM 10642 / AEDII12DO).